Here is a 358-residue protein sequence, read N- to C-terminus: Trans-enoyl reductase pvhC (358 aa).

48-51 (VDSK) is a binding site for NADP(+). 134 to 141 (ISFLTSGL) contacts substrate. NADP(+)-binding positions include 169–172 (SSSC), 192–195 (SPHN), Y210, and 257–258 (LE). 278 to 282 (GPSLL) contributes to the substrate binding site. NADP(+) is bound at residue 347–348 (VS).

The protein belongs to the zinc-containing alcohol dehydrogenase family. As to quaternary structure, monomer.

Its pathway is secondary metabolite biosynthesis. Its function is as follows. Trans-enoyl reductase; part of the gene cluster that mediates the biosynthesis of varicidin A, an antifungal natural product containing a cis-octahydrodecalin core. The PKS module of pvhA together with the enoylreductase pvhC catalyze the formation of the polyketide unit which is then conjugated to L-isoleucine by the condensation domain of the NRPS module. Activity of the Dieckmann cyclase domain (RED) of pvhA results in release of an acyclic tetramate. The cytochrome P450 monooxygenase pvhE then catalyzes the oxidation of the C21 methyl group to a to carboxylate group. The methyltransferase pvhD then further methylates the pvhE product. The Diels-Alderase pvhB is able to catalyze Diels-Alder cycloaddition using both pvhE and pvhD products as substrates to form the decalin ring, yielding varicidin B and A, respectively. This is Trans-enoyl reductase pvhC from Talaromyces variabilis (Penicillium variabile).